The chain runs to 677 residues: Platelet glycoprotein Ib alpha chain (677 aa).

The signal sequence occupies residues 1-16 (MHLLLWLLLLARLCRP). In terms of domain architecture, LRRNT spans 17–47 (EFICEVSKVTSQVEVNCDNKGLKALPPGLPG). The Extracellular portion of the chain corresponds to 17-564 (EFICEVSKVT…NPDLCCLLPL (548 aa)). An intrachain disulfide couples cysteine 20 to cysteine 33. LRR repeat units follow at residues 72–93 (RLAQLHLRQSQLTQLQVDGMLP), 94–115 (RLETLDVSHNRLKSLPSLGRAL), 117–138 (ALTTLDASFNELVALSPGTLDG), 141–162 (HLHELYLRGNKLKTLPPRLLAP), 165–186 (QLRKLNLADNRLTELPPGFLEG), and 189–210 (ELDTLYLQGNWLRTVPKGFFGD). The 62-residue stretch at 221 to 282 (NPWSCDCEIL…HTYQGKDCPS (62 aa)) folds into the LRRCT domain. Intrachain disulfides connect cysteine 225–cysteine 264 and cysteine 227–cysteine 280. Sulfotyrosine is present on residues tyrosine 291 and tyrosine 294. Threonine 309, threonine 319, threonine 323, threonine 324, threonine 346, threonine 354, threonine 368, threonine 372, threonine 376, threonine 377, and threonine 399 each carry an O-linked (GalNAc...) threonine glycan. The interval 359–499 (TLGPIMPTTT…EPTTTPTSPT (141 aa)) is disordered. Composition is skewed to low complexity over residues 362-385 (PIMPTTTPEPTTPPTTLEPTTTPT), 393-403 (PTTLEPTTTPI), 411-421 (PTTLEPTTTPI), and 427-470 (TPST…TPTI). A compositionally biased stretch (pro residues) spans 471–485 (PELPTPPTTPEPTMP). The span at 486-499 (PTTLEPTTTPTSPT) shows a compositional bias: low complexity. A glycan (O-linked (GalNAc...) threonine) is linked at threonine 487. Serine 497 is a glycosylation site (O-linked (GalNAc...) serine). Threonine 500 carries O-linked (GalNAc...) threonine glycosylation. A glycan (O-linked (GalNAc...) serine) is linked at serine 523. A helical membrane pass occupies residues 565-585 (GFYILGLLWLLFASVVLILLL). The Cytoplasmic portion of the chain corresponds to 586–677 (TWAQHVKPQA…VGVRYSSHSL (92 aa)). Phosphoserine occurs at positions 654 and 657.

As to quaternary structure, two GP-Ib beta are disulfide-linked to one GP-Ib alpha. GP-IX is complexed with the GP-Ib heterodimer via a non covalent linkage. Interacts with FLNB. Interacts with FLNA (via filamin repeats 4, 9, 12, 17, 19, 21, and 23). In terms of processing, O-glycosylated. Post-translationally, glycocalicin is the product of a proteolytic cleavage/shedding, catalyzed by ADAM17, which releases most of the extracellular domain. Binding sites for vWF and thrombin are in this part of the protein.

Its subcellular location is the membrane. Its function is as follows. GP-Ib, a surface membrane protein of platelets, participates in the formation of platelet plugs by binding to the A1 domain of vWF, which is already bound to the subendothelium. This is Platelet glycoprotein Ib alpha chain (GP1BA) from Canis lupus familiaris (Dog).